The following is a 1104-amino-acid chain: Transposon Ty4-P Gag-Pol polyprotein (1104 aa).

Residues 48–112 adopt a coiled-coil conformation; sequence VKQYQRNLNR…VEKIQLLETN (65 aa). A ty4 protease region spans residues 381 to 501; sequence QQQLKSSAKE…KTKMVLSRKY (121 aa). Asp-414 functions as the For protease activity; shared with dimeric partner in the catalytic mechanism. An integrase-type zinc finger-like region spans residues 539-599; sequence AIKPTSSPGF…EPNEFWCQTC (61 aa). In terms of domain architecture, Integrase catalytic spans 619–786; sequence TDHEPGSSWC…LPLKAISRQP (168 aa). Residues Asp-630 and Asp-695 each coordinate Mg(2+).

As to quaternary structure, the protease is a homodimer, whose active site consists of two apposed aspartic acid residues. Proteolytically processed into capsid protein (CA), Ty4 protease (PR), integrase (IN) and reverse transcriptase/ribonuclease H (RT) proteins. Initially, virus-like particles (VLPs) are composed of the structural unprocessed proteins Gag and Gag-Pol, and also contain the host initiator methionine tRNA (tRNA(i)-Met) which serves as a primer for minus-strand DNA synthesis, and a dimer of genomic Ty RNA. Processing of the polyproteins occurs within the particle and proceeds by an ordered pathway, called maturation. First, the protease (PR) is released by autocatalytic cleavage of the Gag-Pol polyprotein, and this cleavage is a prerequisite for subsequent processing at the remaining sites to release the mature structural and catalytic proteins. Maturation takes place prior to the RT reaction and is required to produce transposition-competent VLPs.

The protein localises to the cytoplasm. It localises to the nucleus. The catalysed reaction is DNA(n) + a 2'-deoxyribonucleoside 5'-triphosphate = DNA(n+1) + diphosphate. It carries out the reaction Endonucleolytic cleavage to 5'-phosphomonoester.. Capsid protein (CA) is the structural component of the virus-like particle (VLP), forming the shell that encapsulates the retrotransposons dimeric RNA genome. In terms of biological role, the aspartyl protease (PR) mediates the proteolytic cleavages of the Gag and Gag-Pol polyproteins after assembly of the VLP. Its function is as follows. Reverse transcriptase/ribonuclease H (RT) is a multifunctional enzyme that catalyzes the conversion of the retro-elements RNA genome into dsDNA within the VLP. The enzyme displays a DNA polymerase activity that can copy either DNA or RNA templates, and a ribonuclease H (RNase H) activity that cleaves the RNA strand of RNA-DNA heteroduplexes during plus-strand synthesis and hydrolyzes RNA primers. The conversion leads to a linear dsDNA copy of the retrotransposon that includes long terminal repeats (LTRs) at both ends. Functionally, integrase (IN) targets the VLP to the nucleus, where a subparticle preintegration complex (PIC) containing at least integrase and the newly synthesized dsDNA copy of the retrotransposon must transit the nuclear membrane. Once in the nucleus, integrase performs the integration of the dsDNA into the host genome. This chain is Transposon Ty4-P Gag-Pol polyprotein (TY4B-P), found in Saccharomyces cerevisiae (strain ATCC 204508 / S288c) (Baker's yeast).